The sequence spans 494 residues: Aspartyl/glutamyl-tRNA(Asn/Gln) amidotransferase subunit B (494 aa).

The protein belongs to the GatB/GatE family. GatB subfamily. As to quaternary structure, heterotrimer of A, B and C subunits.

It carries out the reaction L-glutamyl-tRNA(Gln) + L-glutamine + ATP + H2O = L-glutaminyl-tRNA(Gln) + L-glutamate + ADP + phosphate + H(+). The enzyme catalyses L-aspartyl-tRNA(Asn) + L-glutamine + ATP + H2O = L-asparaginyl-tRNA(Asn) + L-glutamate + ADP + phosphate + 2 H(+). Allows the formation of correctly charged Asn-tRNA(Asn) or Gln-tRNA(Gln) through the transamidation of misacylated Asp-tRNA(Asn) or Glu-tRNA(Gln) in organisms which lack either or both of asparaginyl-tRNA or glutaminyl-tRNA synthetases. The reaction takes place in the presence of glutamine and ATP through an activated phospho-Asp-tRNA(Asn) or phospho-Glu-tRNA(Gln). This Synechococcus sp. (strain CC9902) protein is Aspartyl/glutamyl-tRNA(Asn/Gln) amidotransferase subunit B.